Consider the following 396-residue polypeptide: Phosphoglycerate kinase (396 aa).

Substrate is bound by residues 21–23 (DLN), Arg-36, 59–62 (HLGR), Arg-113, and Arg-146. ATP contacts are provided by residues Lys-197, Glu-319, and 345–348 (GGDT).

It belongs to the phosphoglycerate kinase family. In terms of assembly, monomer.

Its subcellular location is the cytoplasm. It catalyses the reaction (2R)-3-phosphoglycerate + ATP = (2R)-3-phospho-glyceroyl phosphate + ADP. The protein operates within carbohydrate degradation; glycolysis; pyruvate from D-glyceraldehyde 3-phosphate: step 2/5. The protein is Phosphoglycerate kinase of Legionella pneumophila (strain Corby).